The following is a 192-amino-acid chain: Probable GTP-binding protein EngB (192 aa).

An EngB-type G domain is found at 22-192 (SLPEIVFVGR…LLEQLENYTG (171 aa)). GTP contacts are provided by residues 30–37 (GRSNVGKS), 57–61 (GKTQL), 75–78 (DLPG), 142–145 (TKYD), and 172–174 (YSA). Positions 37 and 59 each coordinate Mg(2+).

The protein belongs to the TRAFAC class TrmE-Era-EngA-EngB-Septin-like GTPase superfamily. EngB GTPase family. Mg(2+) serves as cofactor.

Its function is as follows. Necessary for normal cell division and for the maintenance of normal septation. The protein is Probable GTP-binding protein EngB of Prosthecochloris aestuarii (strain DSM 271 / SK 413).